A 104-amino-acid polypeptide reads, in one-letter code: Large ribosomal subunit protein bL21 (104 aa).

It belongs to the bacterial ribosomal protein bL21 family. Part of the 50S ribosomal subunit. Contacts protein L20.

In terms of biological role, this protein binds to 23S rRNA in the presence of protein L20. The sequence is that of Large ribosomal subunit protein bL21 from Streptococcus equi subsp. equi (strain 4047).